Here is a 799-residue protein sequence, read N- to C-terminus: Histidine biosynthesis trifunctional protein (799 aa).

Positions 1–229 are phosphoribosyl-AMP cyclohydrolase; the sequence is MVLPILPLID…FIVEQENVGF (229 aa). Residues 230–312 are phosphoribosyl-ATP pyrophosphohydrolase; the sequence is CHLETMSCFG…FYFALAKLVT (83 aa). A histidinol dehydrogenase region spans residues 313 to 799; it reads NNVSLKDVEN…KLGLIPKDFQ (487 aa). Gln-618 and His-621 together coordinate Zn(2+). Residues Glu-687 and His-688 contribute to the active site. Zn(2+) contacts are provided by Asp-721 and His-780.

The protein in the C-terminal section; belongs to the histidinol dehydrogenase family. It depends on Zn(2+) as a cofactor.

It carries out the reaction 1-(5-phospho-beta-D-ribosyl)-5'-AMP + H2O = 1-(5-phospho-beta-D-ribosyl)-5-[(5-phospho-beta-D-ribosylamino)methylideneamino]imidazole-4-carboxamide. It catalyses the reaction 1-(5-phospho-beta-D-ribosyl)-ATP + H2O = 1-(5-phospho-beta-D-ribosyl)-5'-AMP + diphosphate + H(+). The enzyme catalyses L-histidinol + 2 NAD(+) + H2O = L-histidine + 2 NADH + 3 H(+). The protein operates within amino-acid biosynthesis; L-histidine biosynthesis; L-histidine from 5-phospho-alpha-D-ribose 1-diphosphate: step 2/9. Its pathway is amino-acid biosynthesis; L-histidine biosynthesis; L-histidine from 5-phospho-alpha-D-ribose 1-diphosphate: step 3/9. It functions in the pathway amino-acid biosynthesis; L-histidine biosynthesis; L-histidine from 5-phospho-alpha-D-ribose 1-diphosphate: step 9/9. The polypeptide is Histidine biosynthesis trifunctional protein (HIS4) (Saccharomyces bayanus (Yeast)).